The chain runs to 488 residues: Probable multidrug resistance protein NorM (488 aa).

Helical transmembrane passes span 11 to 31 (AILR…AMVF), 55 to 75 (YAFV…LVAI), 97 to 117 (AALA…LLVF), 127 to 147 (AMQF…FMVL), 159 to 179 (PVMA…YSFI), 190 to 210 (LAGI…LLAL), 247 to 267 (GTYA…GIIG), 271 to 291 (LAAH…PVGL), 317 to 337 (VGIG…WWMP), 355 to 375 (VAAM…FDGT), 393 to 413 (FLVG…LLAF), and 421 to 441 (GVWW…TLAF).

Belongs to the multi antimicrobial extrusion (MATE) (TC 2.A.66.1) family.

It localises to the cell inner membrane. Functionally, multidrug efflux pump. The sequence is that of Probable multidrug resistance protein NorM (norM) from Pseudomonas aeruginosa (strain ATCC 15692 / DSM 22644 / CIP 104116 / JCM 14847 / LMG 12228 / 1C / PRS 101 / PAO1).